The sequence spans 818 residues: Sorting nexin-29 (818 aa).

The RUN domain maps to 36-180; that stretch reads SDSDSRVTCL…ILFAINIDNK (145 aa). The tract at residues 267–299 is disordered; that stretch reads VSFDDDEEEQGTGDTLKKMPGTAESSEENSDRS. Residues S268, S291, S292, S330, S344, S447, and S452 each carry the phosphoserine modification. 2 disordered regions span residues 343 to 375 and 441 to 462; these read KSID…PDRT and RYRE…PSAS. Residues 445–462 show a composition bias toward low complexity; the sequence is ASSPGQGSPLSSLLPSAS. Residues 467–547 are a coiled coil; sequence MTVHELRQAI…VLKVQLKKYV (81 aa). S642 carries the phosphoserine modification. A Phosphothreonine modification is found at T644. S645 and S649 each carry phosphoserine. The PX domain occupies 659–782; that stretch reads ALINVWIPSV…PFFVDITPPG (124 aa). The tract at residues 781–818 is disordered; it reads PGEPLNKSSRPKAVSRFPKLSRGHPREVRNVEPQSGDL.

It belongs to the sorting nexin family.

In Mus musculus (Mouse), this protein is Sorting nexin-29 (Snx29).